The sequence spans 191 residues: Thymidylate kinase (191 aa).

Residue 7–14 (GVDGAGKS) coordinates ATP.

Belongs to the thymidylate kinase family.

It carries out the reaction dTMP + ATP = dTDP + ADP. Functionally, phosphorylation of dTMP to form dTDP in both de novo and salvage pathways of dTTP synthesis. This is Thymidylate kinase (tmk) from Helicobacter pylori (strain ATCC 700392 / 26695) (Campylobacter pylori).